We begin with the raw amino-acid sequence, 77 residues long: Tachyplesin-2 (77 aa).

The signal sequence occupies residues 1-23 (MKKLVIALCLMMVLAVMVEEAEA). Cystine bridges form between cysteine 26–cysteine 39 and cysteine 30–cysteine 35. Arginine amide is present on arginine 40. A propeptide spanning residues 41–77 (GKRNEVRQYRDRGYDVRAIPDETFFTRQDEDEDDDEE) is cleaved from the precursor.

Belongs to the tachyplesin/polyphemusin family. In terms of tissue distribution, hemocytes.

It is found in the secreted. Functionally, significantly inhibits the growth of Gram-negative and Gram-positive bacteria. The chain is Tachyplesin-2 from Tachypleus tridentatus (Japanese horseshoe crab).